The sequence spans 381 residues: Gustatory and pheromone receptor 39a, isoform C (381 aa).

At 1 to 37 (MDFQPGELCAYYRLCRYLGIFCIDYNPTKKKFRLRRS) the chain is on the cytoplasmic side. A helical membrane pass occupies residues 38–58 (VLCYIVHFALQAYLVGCISVM). At 59–79 (VTYWRRCFKSELTTTGNHFDR) the chain is on the extracellular side. Residues 80 to 100 (LVMVIALGILVVQNAWLIWLQ) form a helical membrane-spanning segment. The Cytoplasmic portion of the chain corresponds to 101 to 129 (APHLRIVRQIEFYRRNHLANVRLLLPKRL). A helical transmembrane segment spans residues 130 to 150 (LWLIIATNVVYMANFIKTCIF). Over 151 to 171 (EWLTDASRLFVITSLGFPLRY) the chain is Extracellular. Residues 172-192 (LVTSFTMGTYFCMVHIVRLVL) form a helical membrane-spanning segment. Over 193-239 (DWNQSQINAIIDESADLKMTSPNRLRLRVCLEMHDRLMLLCNDEISL) the chain is Cytoplasmic. A helical membrane pass occupies residues 240 to 260 (VYGFIAWLSWMFASLDVTGVI). The Extracellular portion of the chain corresponds to 261 to 271 (YLTMVIQTKKS). A helical membrane pass occupies residues 272–292 (IVLKLITNVVWLSPTFMTCAA). The Cytoplasmic portion of the chain corresponds to 293 to 350 (SFMSNRVTIQANKTAKMLTKVPRTGTGLDRMIEKFLLKNLRQKPILTAYGFFALDKST). Residues 351-371 (LFKLFTAIFTYMVILVQFKEM) traverse the membrane as a helical segment. Residues 372–381 (ENSTKSINKF) lie on the Extracellular side of the membrane. Asn373 carries N-linked (GlcNAc...) asparagine glycosylation.

The protein belongs to the insect chemoreceptor superfamily. Gustatory receptor (GR) family. Gr21a subfamily. As to expression, expressed in the adult labellar chemosensory neurons. In larvae, is expressed in neurons of the terminal external chemosensory organ, as well as in the dorsal pharyngeal sense organ.

The protein resides in the cell membrane. Its function is as follows. Gustatory receptor which mediates acceptance or avoidance behavior, depending on its substrates. Plays a role in sustaining courtship behavior in males, possibly through the reception of a stimulating arrestant pheromone. This Drosophila melanogaster (Fruit fly) protein is Gustatory and pheromone receptor 39a, isoform C (Gr39a).